Here is a 414-residue protein sequence, read N- to C-terminus: Tyrosine--tRNA ligase (414 aa).

Position 35 (tyrosine 35) interacts with L-tyrosine. Positions 40 to 49 (PTADSLHVGH) match the 'HIGH' region motif. Tyrosine 164 and glutamine 168 together coordinate L-tyrosine. The 'KMSKS' region motif lies at 226–230 (KFGKT). Residue lysine 229 participates in ATP binding. The region spanning 347–414 (TKVIDALVEL…KKKYFVILVK (68 aa)) is the S4 RNA-binding domain.

The protein belongs to the class-I aminoacyl-tRNA synthetase family. TyrS type 1 subfamily. Homodimer.

Its subcellular location is the cytoplasm. It catalyses the reaction tRNA(Tyr) + L-tyrosine + ATP = L-tyrosyl-tRNA(Tyr) + AMP + diphosphate + H(+). Catalyzes the attachment of tyrosine to tRNA(Tyr) in a two-step reaction: tyrosine is first activated by ATP to form Tyr-AMP and then transferred to the acceptor end of tRNA(Tyr). The sequence is that of Tyrosine--tRNA ligase from Mycoplasma capricolum subsp. capricolum (strain California kid / ATCC 27343 / NCTC 10154).